Consider the following 89-residue polypeptide: Neuropeptide F (89 aa).

A signal peptide spans 1–29 (MASGTFTQRLLVALMIFALIADLSTLVAA). At phenylalanine 61 the chain carries Phenylalanine amide. Positions 65-89 (GGYLNPAIFGQDEQEVDWQDSTFSR) are excised as a propeptide.

It belongs to the NPY family.

It is found in the secreted. Functionally, an integral part of the sensory system that mediates food signaling, providing the neural basis for the regulation of food response; coordinates larval foraging and social behavior changes during development. May have a hormonal role in females. This Anopheles gambiae (African malaria mosquito) protein is Neuropeptide F.